We begin with the raw amino-acid sequence, 231 residues long: D-allulose-6-phosphate 3-epimerase (231 aa).

S6 serves as a coordination point for substrate. H30, D32, and H63 together coordinate a divalent metal cation. Catalysis depends on D32, which acts as the Proton acceptor. Substrate contacts are provided by residues H63, 140 to 143 (GFAG), 173 to 175 (DGS), and 195 to 197 (GTS). Residue D173 participates in a divalent metal cation binding. D173 acts as the Proton donor in catalysis.

It belongs to the ribulose-phosphate 3-epimerase family. AlsE subfamily. As to quaternary structure, homohexamer. Trimer of dimers. Co(2+) serves as cofactor. The cofactor is Mn(2+). Zn(2+) is required as a cofactor.

It carries out the reaction D-allulose 6-phosphate = keto-D-fructose 6-phosphate. The protein operates within carbohydrate degradation; D-allose degradation. Its function is as follows. Catalyzes the reversible epimerization of D-allulose 6-phosphate to D-fructose 6-phosphate. Can also catalyze with lower efficiency the reversible epimerization of D-ribulose 5-phosphate to D-xylulose 5-phosphate. This Escherichia coli (strain K12) protein is D-allulose-6-phosphate 3-epimerase.